Consider the following 241-residue polypeptide: Pyrroloquinoline-quinone synthase (241 aa).

This sequence belongs to the PqqC family.

The catalysed reaction is 6-(2-amino-2-carboxyethyl)-7,8-dioxo-1,2,3,4,7,8-hexahydroquinoline-2,4-dicarboxylate + 3 O2 = pyrroloquinoline quinone + 2 H2O2 + 2 H2O + H(+). It participates in cofactor biosynthesis; pyrroloquinoline quinone biosynthesis. In terms of biological role, ring cyclization and eight-electron oxidation of 3a-(2-amino-2-carboxyethyl)-4,5-dioxo-4,5,6,7,8,9-hexahydroquinoline-7,9-dicarboxylic-acid to PQQ. This Ruegeria pomeroyi (strain ATCC 700808 / DSM 15171 / DSS-3) (Silicibacter pomeroyi) protein is Pyrroloquinoline-quinone synthase.